The primary structure comprises 144 residues: Transcription antitermination protein NusB (144 aa).

This sequence belongs to the NusB family.

Functionally, involved in transcription antitermination. Required for transcription of ribosomal RNA (rRNA) genes. Binds specifically to the boxA antiterminator sequence of the ribosomal RNA (rrn) operons. This is Transcription antitermination protein NusB from Streptococcus agalactiae serotype Ia (strain ATCC 27591 / A909 / CDC SS700).